A 249-amino-acid chain; its full sequence is 2,3-bisphosphoglycerate-dependent phosphoglycerate mutase (249 aa).

Substrate is bound by residues 9-16, 22-23, Arg-61, 88-91, Lys-99, 115-116, and 184-185; these read RHGQSQWN, TG, ERHY, RR, and GN. His-10 functions as the Tele-phosphohistidine intermediate in the catalytic mechanism. The active-site Proton donor/acceptor is Glu-88.

The protein belongs to the phosphoglycerate mutase family. BPG-dependent PGAM subfamily. Homodimer.

It catalyses the reaction (2R)-2-phosphoglycerate = (2R)-3-phosphoglycerate. The protein operates within carbohydrate degradation; glycolysis; pyruvate from D-glyceraldehyde 3-phosphate: step 3/5. Catalyzes the interconversion of 2-phosphoglycerate and 3-phosphoglycerate. This Xylella fastidiosa (strain M12) protein is 2,3-bisphosphoglycerate-dependent phosphoglycerate mutase.